A 130-amino-acid chain; its full sequence is MSMKIKICIPTERIQNPIISETIVETGILLNIMVANIDSTYGELIADVKDSRFARIKKALESRGAIVAILDRPIHRDEEECVECGACISVCPMNVYSFDETWSLCVDEKKCIQCGMCIKMCPHGALKLGE.

4Fe-4S ferredoxin-type domains follow at residues 72–101 (RPIHRDEEECVECGACISVCPMNVYSFDET) and 102–130 (WSLCVDEKKCIQCGMCIKMCPHGALKLGE). Cys-81, Cys-84, Cys-87, Cys-91, Cys-111, Cys-114, Cys-117, and Cys-121 together coordinate [4Fe-4S] cluster.

In terms of assembly, may form a complex with MA_1821. It depends on [4Fe-4S] cluster as a cofactor.

The protein operates within amino-acid biosynthesis. Required for O-acetylhomoserine sulfhydrylase (OAHS)-independent homocysteine (Hcy) biosynthesis. Together with MA_1821, catalyzes the condensation of sulfide with aspartate semialdehyde to generate homocysteine. May be involved in the reduction of the disulfide formed in MA_1821. The sequence is that of L-aspartate semialdehyde sulfurtransferase iron-sulfur subunit from Methanosarcina acetivorans (strain ATCC 35395 / DSM 2834 / JCM 12185 / C2A).